Consider the following 476-residue polypeptide: Protein DETOXIFICATION 4 (476 aa).

The next 12 membrane-spanning stretches (helical) occupy residues 35-55 (AVPM…SVMV), 66-86 (GVAL…FGLV), 117-137 (IPIC…LISL), 154-174 (LIPT…LLAQ), 176-196 (LVLP…AVCW), 208-228 (GAAL…SCYV), 260-280 (AAML…SGLL), 289-309 (VLSI…GVAA), 332-352 (LAGL…LFAF), 370-390 (VADL…TAVL), 408-428 (VVAY…SCEL), and 433-453 (LWCG…IVTA).

It belongs to the multi antimicrobial extrusion (MATE) (TC 2.A.66.1) family.

Its subcellular location is the membrane. The protein is Protein DETOXIFICATION 4 of Arabidopsis thaliana (Mouse-ear cress).